Consider the following 516-residue polypeptide: Probable cytochrome P450 9f2 (516 aa).

Cys460 serves as a coordination point for heme.

This sequence belongs to the cytochrome P450 family. Requires heme as cofactor.

Its subcellular location is the endoplasmic reticulum membrane. It localises to the microsome membrane. May be involved in the metabolism of insect hormones and in the breakdown of synthetic insecticides. The sequence is that of Probable cytochrome P450 9f2 (Cyp9f2) from Drosophila melanogaster (Fruit fly).